A 522-amino-acid polypeptide reads, in one-letter code: Endochitinase 11 (522 aa).

Residues 1–24 (MLFSMVMFTERWWVGSKDCPRVPA) form the signal peptide. N-linked (GlcNAc...) asparagine glycans are attached at residues Asn-148 and Asn-275. A GH18 domain is found at 235–522 (KHVYAPYVDF…ALTCLRNSTA (288 aa)). Residue Glu-346 is the Proton donor of the active site. 2 N-linked (GlcNAc...) asparagine glycosylation sites follow: Asn-455 and Asn-519.

Belongs to the glycosyl hydrolase 18 family. Chitinase class V subfamily.

Its subcellular location is the secreted. The enzyme catalyses Random endo-hydrolysis of N-acetyl-beta-D-glucosaminide (1-&gt;4)-beta-linkages in chitin and chitodextrins.. Functionally, secreted chitinase involved in the degradation of chitin, a component of the cell walls of fungi and exoskeletal elements of some animals (including worms and arthropods). Participates in the infection process and directly acts in the penetration process of the host cuticle. This chain is Endochitinase 11 (chi11), found in Metarhizium anisopliae (Entomophthora anisopliae).